A 209-amino-acid polypeptide reads, in one-letter code: Uracil phosphoribosyltransferase (209 aa).

5-phospho-alpha-D-ribose 1-diphosphate contacts are provided by residues Arg79, Arg104, and Asp131–Ser139. Uracil contacts are provided by residues Ile194 and Gly199–Ala201. Position 200 (Asp200) interacts with 5-phospho-alpha-D-ribose 1-diphosphate.

The protein belongs to the UPRTase family. It depends on Mg(2+) as a cofactor.

The enzyme catalyses UMP + diphosphate = 5-phospho-alpha-D-ribose 1-diphosphate + uracil. Its pathway is pyrimidine metabolism; UMP biosynthesis via salvage pathway; UMP from uracil: step 1/1. Allosterically activated by GTP. Catalyzes the conversion of uracil and 5-phospho-alpha-D-ribose 1-diphosphate (PRPP) to UMP and diphosphate. The polypeptide is Uracil phosphoribosyltransferase (Oceanobacillus iheyensis (strain DSM 14371 / CIP 107618 / JCM 11309 / KCTC 3954 / HTE831)).